Here is a 90-residue protein sequence, read N- to C-terminus: uncharacterized protein (90 aa).

This is an uncharacterized protein from Escherichia coli O157:H7.